A 361-amino-acid chain; its full sequence is C3a anaphylatoxin chemotactic receptor (361 aa).

Residues 1-64 (MQQETQAPPL…FASSEVRVIS (64 aa)) are Extracellular-facing. N-linked (GlcNAc...) asparagine glycans are attached at residues Asn-36 and Asn-50. A helical transmembrane segment spans residues 65-85 (LVVYCLTFLLGVPGNSFVIFI). Residues 86–96 (AGMKMKRTVNT) are Cytoplasmic-facing. Residues 97–117 (IWFLNLATADLLCCLSVPLTV) form a helical membrane-spanning segment. Topologically, residues 118–134 (AEILLDHHWPYGYAMCK) are extracellular. Cys-133 and Cys-210 form a disulfide bridge. The helical transmembrane segment at 135–155 (ILPSVIVISMFASVFTLNIIS) threads the bilayer. Over 156–177 (LDRFTQVITPVWAQNHRSLLLA) the chain is Cytoplasmic. The helical transmembrane segment at 178–198 (RLSCVAVWILALLLSLPFMIL) threads the bilayer. Over 199 to 224 (RRTYEEFNMTVCTFDDDDFTTYGALS) the chain is Extracellular. A helical transmembrane segment spans residues 225 to 245 (IVRFVFGFLIPLMSIVTCYGI). Over 246 to 262 (IARKLGSRHFRSGRAFR) the chain is Cytoplasmic. The helical transmembrane segment at 263–283 (IMLAVIVAFFLCWMPYHVLDL) threads the bilayer. The Extracellular portion of the chain corresponds to 284 to 301 (IRSYGGESSSMVALKVDP). A helical membrane pass occupies residues 302-322 (LAISLAYVNSCLNPVLYVFMG). The Cytoplasmic portion of the chain corresponds to 323–361 (QDFKNKVQLSLRRVFERAFSEEGTQISRSTQSQQVHSVL).

The protein belongs to the G-protein coupled receptor 1 family.

Its subcellular location is the cell membrane. In terms of biological role, receptor for the chemotactic and inflammatory peptide anaphylatoxin C3a. This receptor stimulates chemotaxis, granule enzyme release and superoxide anion production. In Danio rerio (Zebrafish), this protein is C3a anaphylatoxin chemotactic receptor (c3ar1).